Consider the following 341-residue polypeptide: Phospholipid phosphatase homolog 1.2 homolog (341 aa).

The next 3 helical transmembrane spans lie at 30-50, 71-91, and 122-142; these read LFIF…LLGV, ITAV…VLFV, and LLTY…LNIV. N-linked (GlcNAc...) asparagine glycosylation is present at asparagine 162. Transmembrane regions (helical) follow at residues 223 to 243 and 257 to 277; these read RIVV…ISFS and VGIF…TDLF. 2 disordered regions span residues 284 to 308 and 322 to 341; these read SETQ…ERHR and FEAT…PQSA. The segment covering 299 to 308 has biased composition (basic and acidic residues); that stretch reads RNSEDEERHR.

It belongs to the PA-phosphatase related phosphoesterase family.

Its subcellular location is the membrane. The chain is Phospholipid phosphatase homolog 1.2 homolog from Caenorhabditis elegans.